The sequence spans 911 residues: Protein translocase subunit SecA (911 aa).

Residues Q87, 105 to 109, and D512 contribute to the ATP site; that span reads GEGKT. Positions 861–880 are disordered; the sequence is APGLGSEQLSEEGAEVAVAS. Zn(2+)-binding residues include C895, C897, C906, and H907.

This sequence belongs to the SecA family. Monomer and homodimer. Part of the essential Sec protein translocation apparatus which comprises SecA, SecYEG and auxiliary proteins SecDF-YajC and YidC. Zn(2+) serves as cofactor.

The protein localises to the cell inner membrane. The protein resides in the cytoplasm. It carries out the reaction ATP + H2O + cellular proteinSide 1 = ADP + phosphate + cellular proteinSide 2.. Its function is as follows. Part of the Sec protein translocase complex. Interacts with the SecYEG preprotein conducting channel. Has a central role in coupling the hydrolysis of ATP to the transfer of proteins into and across the cell membrane, serving both as a receptor for the preprotein-SecB complex and as an ATP-driven molecular motor driving the stepwise translocation of polypeptide chains across the membrane. The polypeptide is Protein translocase subunit SecA (Pseudomonas putida (strain ATCC 47054 / DSM 6125 / CFBP 8728 / NCIMB 11950 / KT2440)).